The following is a 314-amino-acid chain: tRNA dimethylallyltransferase (314 aa).

Residue Gly12–Ser19 participates in ATP binding. Substrate is bound at residue Thr14–Ser19. An interaction with substrate tRNA region spans residues Asp37–Gln40.

It belongs to the IPP transferase family. As to quaternary structure, monomer. It depends on Mg(2+) as a cofactor.

It carries out the reaction adenosine(37) in tRNA + dimethylallyl diphosphate = N(6)-dimethylallyladenosine(37) in tRNA + diphosphate. Its function is as follows. Catalyzes the transfer of a dimethylallyl group onto the adenine at position 37 in tRNAs that read codons beginning with uridine, leading to the formation of N6-(dimethylallyl)adenosine (i(6)A). In Rhodospirillum centenum (strain ATCC 51521 / SW), this protein is tRNA dimethylallyltransferase.